We begin with the raw amino-acid sequence, 953 residues long: TPR repeat-containing protein ZIP4 (953 aa).

Residues 129–162 (ASFFHRSGLAWLDLGRVDLASACFEKATPLVSAA) form a TPR 1 repeat. Positions 248–269 (AASPSSSSPRTPPYGGATPKTP) are disordered. TPR repeat units lie at residues 432–465 (HALLWNCGTEHFRAKNYDTSADLIERSMLYVSRD) and 473–506 (ADCFRVLSICHIALQHLDRALEFVNEAYKVEPNI). Residues 925 to 953 (VSGDEPDECSQEEAPKASISGSMSQPVLV) form a disordered region. Residues 943 to 953 (ISGSMSQPVLV) show a composition bias toward polar residues.

In terms of assembly, interacts with HEI10 and SHOC1.

The protein resides in the nucleus. Its subcellular location is the chromosome. In terms of biological role, required for crossover formation, complete synapsis of homologous chromosomes and bivalent formation during meiosis. Is specific to recombination events resulting in interference-sensitive crossovers (class I meiotic crossover) and works cooperatively with MER3 to promote crossovers. This chain is TPR repeat-containing protein ZIP4, found in Oryza sativa subsp. japonica (Rice).